Here is a 4563-residue protein sequence, read N- to C-terminus: Apolipoprotein B-100 (4563 aa).

The first 27 residues, 1 to 27, serve as a signal peptide directing secretion; that stretch reads MDPPRPALLALLALPALLLLLLAGARA. The tract at residues 32-126 is heparin-binding; the sequence is LENVSLVCPK…KNSEEFAAAM (95 aa). A glycan (N-linked (GlcNAc...) asparagine) is linked at asparagine 34. Intrachain disulfides connect cysteine 39–cysteine 88 and cysteine 78–cysteine 97. The Vitellogenin domain occupies 46 to 672; that stretch reads FKHLRKYTYN…PNNYLPKESM (627 aa). Asparagine 185 carries N-linked (GlcNAc...) asparagine glycosylation. Cystine bridges form between cysteine 186–cysteine 212, cysteine 245–cysteine 261, cysteine 385–cysteine 390, and cysteine 478–cysteine 513. The tract at residues 232–306 is heparin-binding; the sequence is TRPLSTLISS…RFFGEGTKKM (75 aa). Residues 902–959 are heparin-binding; that stretch reads NTNFFHESGLEAHVALKAGKLKFIIPSPKRPVKLLSGGNTLHLVSTTKTEVIPPLIEN. An intrachain disulfide couples cysteine 966 to cysteine 976. Asparagine 983 carries N-linked (GlcNAc...) asparagine glycosylation. Cysteine 1112 is lipidated: S-palmitoyl cysteine. Asparagine 1368, asparagine 1377, and asparagine 1523 each carry an N-linked (GlcNAc...) asparagine glycan. An N6-acetyllysine modification is found at lysine 2004. A heparin-binding region spans residues 2043 to 2178; it reads RDAVEKPQEF…EKLSQLQTYM (136 aa). N-linked (GlcNAc...) asparagine glycans are attached at residues asparagine 2239, asparagine 2560, asparagine 2779, asparagine 2982, and asparagine 3101. The heparin-binding stretch occupies residues 3161 to 3236; the sequence is FLKTTKQSFD…KIKFDKYKAE (76 aa). The segment at 3174–3184 is basic (possible receptor binding region); the sequence is KAQYKKNKHRH. A disulfide bridge links cysteine 3194 with cysteine 3324. Residue asparagine 3224 is glycosylated (N-linked (GlcNAc...) asparagine). Position 3279 is a phosphoserine (serine 3279). Asparagine 3336 and asparagine 3358 each carry an N-linked (GlcNAc...) asparagine glycan. The interval 3373 to 3393 is LDL receptor binding; the sequence is VIDALQYKLEGTTRLTRKRGL. Positions 3383 to 3516 are heparin-binding; it reads GTTRLTRKRG…REYSGTIASE (134 aa). A basic (possible receptor binding region) region spans residues 3386 to 3394; sequence RLTRKRGLK. N-linked (GlcNAc...) asparagine glycans are attached at residues asparagine 3411, asparagine 3465, and asparagine 3895. A Phosphoserine; by FAM20C modification is found at serine 4048. Threonine 4052 carries the phosphothreonine modification. Residues asparagine 4237 and asparagine 4431 are each glycosylated (N-linked (GlcNAc...) asparagine).

As to quaternary structure, interacts with PCSK9. Interacts with MTTP. Interacts with AUP1. Interacts with CIDEB. Palmitoylated; structural requirement for proper assembly of the hydrophobic core of the lipoprotein particle.

It localises to the cytoplasm. Its subcellular location is the secreted. The protein localises to the lipid droplet. Functionally, apolipoprotein B is a major protein constituent of chylomicrons (apo B-48), LDL (apo B-100) and VLDL (apo B-100). Apo B-100 functions as a recognition signal for the cellular binding and internalization of LDL particles by the apoB/E receptor. The polypeptide is Apolipoprotein B-100 (APOB) (Homo sapiens (Human)).